Consider the following 424-residue polypeptide: Gamma-glutamyl phosphate reductase (424 aa).

Belongs to the gamma-glutamyl phosphate reductase family.

Its subcellular location is the cytoplasm. It carries out the reaction L-glutamate 5-semialdehyde + phosphate + NADP(+) = L-glutamyl 5-phosphate + NADPH + H(+). It participates in amino-acid biosynthesis; L-proline biosynthesis; L-glutamate 5-semialdehyde from L-glutamate: step 2/2. Its function is as follows. Catalyzes the NADPH-dependent reduction of L-glutamate 5-phosphate into L-glutamate 5-semialdehyde and phosphate. The product spontaneously undergoes cyclization to form 1-pyrroline-5-carboxylate. The chain is Gamma-glutamyl phosphate reductase from Dehalococcoides mccartyi (strain ATCC BAA-2266 / KCTC 15142 / 195) (Dehalococcoides ethenogenes (strain 195)).